The chain runs to 223 residues: MRLVIARCSVDYAGRLTAHLPSAPRLILVKADGSVSIHADDRAYKPLNWMSPPCTLKEGSGDEEGVWTVINKAGEKLIITMEEILHDSSHELGVDPGLIKDGVEAHLQELLADRIETLGDGYTLIRREYMTAIGPVDILCRDATGQTVAVEIKRRGEIDGVEQLTRYLELLNRDPHLAPVRGVFAAQEIKPQARVLATDRGIGCTVLDYNAMRGIEDDKLRLF.

Belongs to the NucS endonuclease family.

The protein localises to the cytoplasm. Its function is as follows. Cleaves both 3' and 5' ssDNA extremities of branched DNA structures. This is Endonuclease NucS from Streptomyces avermitilis (strain ATCC 31267 / DSM 46492 / JCM 5070 / NBRC 14893 / NCIMB 12804 / NRRL 8165 / MA-4680).